Consider the following 353-residue polypeptide: Guanine nucleotide-binding protein G(q) subunit alpha (353 aa).

Residues C3 and C4 are each lipidated (S-palmitoyl cysteine). Positions 32–353 (RELKLLLLGT…QLNLKEYNLV (322 aa)) constitute a G-alpha domain. The segment at 35-48 (KLLLLGTGESGKST) is G1 motif. GTP is bound by residues 40–47 (GTGESGKS), 174–180 (LRVRVPT), 199–203 (DVGGQ), 268–271 (NKKD), and A325. Residues S47 and T180 each coordinate Mg(2+). The segment at 172–180 (DILRVRVPT) is G2 motif. Positions 195–204 (FRMVDVGGQR) are G3 motif. Residues 264–271 (ILFLNKKD) form a G4 motif region. Positions 323 to 328 (TCATDT) are G5 motif.

This sequence belongs to the G-alpha family. G(q) subfamily. G proteins are composed of 3 units; alpha, beta and gamma. The alpha chain contains the guanine nucleotide binding site.

In terms of biological role, guanine nucleotide-binding proteins (G proteins) are involved as modulators or transducers in various transmembrane signaling systems. This chain is Guanine nucleotide-binding protein G(q) subunit alpha, found in Lymnaea stagnalis (Great pond snail).